Reading from the N-terminus, the 941-residue chain is MINIKKSLNLPKTKFPMKANLAYKENEILETWKKINLYNKLHKNKKKNKQFFLQDGPPYANGNIHIGHAVNKILKDIILKFKRMSGFFSPYIPCWDCHGLPIEHIIEKKLSKKKINKKEFRKICFKYVLKQVEKQKNDFIRLGIIANWDNINLSTDYINQSNTIKVLTKIVEKGLIYRDLKPVYWCFDCQSALAEAEIEYKFKKSISIYIEYKLIENSILKNNFFKNYNKKIFNNISILIFTTTPWTIPTCQAIAINPKLYYQIIKINKKYYICIEELTKKIFKKNNIKKWKIILSFKGKEIEHIKCFHPFLNTQIPIILSKHVSNQLGTGAVHMSPDHGYEDFIACKKYKIIPKQIVDSHGFYKIKKYSQLNNIHIFNKENKIIYILKKNKKLFFFQTINHNYPHCWRHKKPIIFRATPQWFINLSKKNFKEDTFNKIKKILWIPSWGKNKMKKMLKIRPDWCISRQRIWGIPLPFFIHKNTGELHPNTVMIMKKIVKKIRNHGYKIWWESNVNTWIKKDSETYRKVNDVLDVWFESGANHQLKIYKHNIKNKKNYVADLYLEGSDQHRGWFMSSLIISMITKTIPPYLSVITHGFVLDKNGQKMSKSLNNNISPKKIIQKKGADILRLWVAYTNYTNDISISNEILEQISDNYRRIRNTIRFLFSNIFDFKANIHIIKYEKMLFLDQWIIEKTYNYQRKIIKKYSQYQFHKVIKKIINFCSIELGSCYLELIKDRQYTMHKNSIERRSSQTAIFYILQFLVRWIAPILSFTAEEIWSQLQEKKEKSIFMTQWYKNKQLIKKKSTYNLFFWKKIFAIRKEINLFIETEKKNKFIKNSLEIILLLYINKKLFNFLLLFNNELKFIFLVSETQLHKYSSAPSLAIKSKKIKKFKILIKKSKKIKCPRCWNYTKKNNFLKNKNSICNKCIKNINQTNKKHIFL.

The short motif at 58-68 is the 'HIGH' region element; the sequence is PYANGNIHIGH. Glu-564 contributes to the L-isoleucyl-5'-AMP binding site. Residues 605 to 609 carry the 'KMSKS' region motif; it reads KMSKS. Position 608 (Lys-608) interacts with ATP. Residues Cys-904, Cys-907, Cys-924, and Cys-927 each coordinate Zn(2+).

Belongs to the class-I aminoacyl-tRNA synthetase family. IleS type 1 subfamily. As to quaternary structure, monomer. Requires Zn(2+) as cofactor.

The protein resides in the cytoplasm. The enzyme catalyses tRNA(Ile) + L-isoleucine + ATP = L-isoleucyl-tRNA(Ile) + AMP + diphosphate. Its function is as follows. Catalyzes the attachment of isoleucine to tRNA(Ile). As IleRS can inadvertently accommodate and process structurally similar amino acids such as valine, to avoid such errors it has two additional distinct tRNA(Ile)-dependent editing activities. One activity is designated as 'pretransfer' editing and involves the hydrolysis of activated Val-AMP. The other activity is designated 'posttransfer' editing and involves deacylation of mischarged Val-tRNA(Ile). The protein is Isoleucine--tRNA ligase of Buchnera aphidicola subsp. Cinara cedri (strain Cc).